The sequence spans 316 residues: Delta(1)-pyrroline-2-carboxylate reductase (316 aa).

Belongs to the ornithine cyclodeaminase/mu-crystallin family.

The enzyme catalyses L-proline + NAD(+) = 1-pyrroline-2-carboxylate + NADH + H(+). It catalyses the reaction L-proline + NADP(+) = 1-pyrroline-2-carboxylate + NADPH + H(+). Catalyzes the reduction of Delta(1)-pyrroline-2-carboxylate (Pyr2C) to L-proline, using preferentially NADPH over NADH as the electron donor. Is likely involved in a degradation pathway that converts trans-3-hydroxy-L-proline (t3LHyp) to L-proline, which would allow P.denitrificans to grow on t3LHyp as a sole carbon source. In Paracoccus denitrificans (strain Pd 1222), this protein is Delta(1)-pyrroline-2-carboxylate reductase.